A 294-amino-acid chain; its full sequence is Glycine--tRNA ligase alpha subunit (294 aa).

This sequence belongs to the class-II aminoacyl-tRNA synthetase family. In terms of assembly, tetramer of two alpha and two beta subunits.

The protein localises to the cytoplasm. It catalyses the reaction tRNA(Gly) + glycine + ATP = glycyl-tRNA(Gly) + AMP + diphosphate. This chain is Glycine--tRNA ligase alpha subunit, found in Polynucleobacter asymbioticus (strain DSM 18221 / CIP 109841 / QLW-P1DMWA-1) (Polynucleobacter necessarius subsp. asymbioticus).